A 1188-amino-acid polypeptide reads, in one-letter code: uncharacterized protein (1188 aa).

4 disordered regions span residues 126–468 (GDLR…SQME), 484–771 (EDRF…LYKP), 790–823 (ARGGAAGPGEPVEVKEPPGLPAKPPASAQPTDEL), and 847–1039 (QRAQ…FSRF). Pro residues-rich tracts occupy residues 139–151 (IPPPPPGPAPGPP), 159–193 (GGSPLPSPPSTAPPPPPLLLEPPPPPSMAPPPPPV), and 208–240 (IPTPPDFIPPAPPLAFLAPPPPPVPAPAPPAPA). Phosphoserine is present on Ser-260. A compositionally biased stretch (basic and acidic residues) spans 322–331 (EAPRKEEGAT). Residues 389–418 (TPPPAPPLPPPAPPLPPPAPPLPPAAPPLP) show a composition bias toward pro residues. Over residues 432-441 (KTPKSSSPAL) the composition is skewed to low complexity. 2 stretches are compositionally biased toward basic and acidic residues: residues 501–514 (KEGKKGPRLPEKET) and 566–583 (IRNELEARLSSAAEKEAK). A compositionally biased stretch (low complexity) spans 618–633 (LPPQSTTLLPTTSLQP). Residues 640-652 (AIPPKATPEPAIP) are compositionally biased toward pro residues. Thr-666 carries the post-translational modification Phosphothreonine. Residues 689-703 (PAIASTATTLPTTTS) show a composition bias toward low complexity. The segment covering 875–893 (AEASSDSIFHSQGTPNSFT) has biased composition (polar residues). The segment covering 920–931 (LGRDAEGTELSR) has biased composition (basic and acidic residues). Over residues 986–1001 (IPPPPEFSNDPEPPAP) the composition is skewed to pro residues. Polar residues predominate over residues 1007–1019 (GRQSSPPRNNYSD). Over residues 1026 to 1035 (AGPGAPPALG) the composition is skewed to low complexity. Arg-1044 bears the Asymmetric dimethylarginine mark. Positions 1069–1160 (GEPHRGPGLP…SPYTTTRYGS (92 aa)) are disordered. Omega-N-methylarginine occurs at positions 1073 and 1084. Arg-1157 carries the post-translational modification Asymmetric dimethylarginine.

This is an uncharacterized protein from Homo sapiens (Human).